The chain runs to 910 residues: DNA mismatch repair protein MutS (910 aa).

The span at 1-11 (MEAKVEEKEPE) shows a compositional bias: basic and acidic residues. Residues 1-21 (MEAKVEEKEPEPVENAGPDAP) form a disordered region. 658–665 (GPNMGGKS) serves as a coordination point for ATP.

This sequence belongs to the DNA mismatch repair MutS family.

In terms of biological role, this protein is involved in the repair of mismatches in DNA. It is possible that it carries out the mismatch recognition step. This protein has a weak ATPase activity. The chain is DNA mismatch repair protein MutS from Brucella suis (strain ATCC 23445 / NCTC 10510).